The sequence spans 331 residues: Adenosine deaminase (331 aa).

Residues histidine 12 and histidine 14 each coordinate Zn(2+). Substrate is bound by residues histidine 14, aspartate 16, and glycine 170. Histidine 197 provides a ligand contact to Zn(2+). Residue glutamate 200 is the Proton donor of the active site. Position 278 (aspartate 278) interacts with Zn(2+).

It belongs to the metallo-dependent hydrolases superfamily. Adenosine and AMP deaminases family. Adenosine deaminase subfamily. Requires Zn(2+) as cofactor.

It catalyses the reaction adenosine + H2O + H(+) = inosine + NH4(+). The enzyme catalyses 2'-deoxyadenosine + H2O + H(+) = 2'-deoxyinosine + NH4(+). Its function is as follows. Catalyzes the hydrolytic deamination of adenosine and 2-deoxyadenosine. This is Adenosine deaminase from Vibrio vulnificus (strain YJ016).